The sequence spans 509 residues: Maturase K (509 aa).

It belongs to the intron maturase 2 family. MatK subfamily.

The protein localises to the plastid. It is found in the chloroplast. Functionally, usually encoded in the trnK tRNA gene intron. Probably assists in splicing its own and other chloroplast group II introns. The protein is Maturase K of Cicer arietinum (Chickpea).